The primary structure comprises 350 residues: Serine-threonine kinase receptor-associated protein (350 aa).

WD repeat units lie at residues 12-56 (GHTR…GTFL), 57-96 (GHKGAVWGATLNKDATKAATAAADFTAKVWDAVSGDELMT), 98-137 (AHKHIVKTVDFTQDSNYLLTGGQDKLLRIYDLNKPEAEPK), 141-179 (GHTSGIKKALWCSEDKQILSADDKTVRLWDHATMTEVKS), 180-212 (LNFNMSVSSMEYIPEGEILVITYGRSIAFHSAV), 221-262 (EAPA…ESYK), and 263-302 (GHFGPIHCVRFSPDGELYASGSEDGTLRLWQTVVGKTYGL). 3 positions are modified to phosphoserine: Ser-312, Ser-335, and Ser-338. The interval 326 to 350 (AEEELEEIASENSDSIYSSTPEVKA) is disordered. Over residues 337-350 (NSDSIYSSTPEVKA) the composition is skewed to polar residues. Residue Tyr-342 is modified to Phosphotyrosine.

Belongs to the WD repeat STRAP family. As to quaternary structure, part of the core SMN complex that contains SMN1, GEMIN2/SIP1, DDX20/GEMIN3, GEMIN4, GEMIN5, GEMIN6, GEMIN7, GEMIN8 and STRAP/UNRIP. Part of the SMN-Sm complex that contains SMN1, GEMIN2/SIP1, DDX20/GEMIN3, GEMIN4, GEMIN5, GEMIN6, GEMIN7, GEMIN8, STRAP/UNRIP and the Sm proteins SNRPB, SNRPD1, SNRPD2, SNRPD3, SNRPE, SNRPF and SNRPG. Interacts directly with GEMIN6 and GEMIN7. Associates with the SMN complex in the cytoplasm but not in the nucleus. Also interacts with CSDE1/UNR and MAWBP. Interacts with PDPK1. Interacts with TRIM48.

It is found in the cytoplasm. The protein localises to the nucleus. The SMN complex catalyzes the assembly of small nuclear ribonucleoproteins (snRNPs), the building blocks of the spliceosome, and thereby plays an important role in the splicing of cellular pre-mRNAs. Most spliceosomal snRNPs contain a common set of Sm proteins SNRPB, SNRPD1, SNRPD2, SNRPD3, SNRPE, SNRPF and SNRPG that assemble in a heptameric protein ring on the Sm site of the small nuclear RNA to form the core snRNP (Sm core). In the cytosol, the Sm proteins SNRPD1, SNRPD2, SNRPE, SNRPF and SNRPG are trapped in an inactive 6S pICln-Sm complex by the chaperone CLNS1A that controls the assembly of the core snRNP. To assemble core snRNPs, the SMN complex accepts the trapped 5Sm proteins from CLNS1A forming an intermediate. Binding of snRNA inside 5Sm triggers eviction of the SMN complex, thereby allowing binding of SNRPD3 and SNRPB to complete assembly of the core snRNP. STRAP plays a role in the cellular distribution of the SMN complex. Negatively regulates TGF-beta signaling but positively regulates the PDPK1 kinase activity by enhancing its autophosphorylation and by significantly reducing the association of PDPK1 with 14-3-3 protein. The polypeptide is Serine-threonine kinase receptor-associated protein (Strap) (Rattus norvegicus (Rat)).